Reading from the N-terminus, the 152-residue chain is 3-dehydroquinate dehydratase (152 aa).

Catalysis depends on Y26, which acts as the Proton acceptor. N77, H83, and D90 together coordinate substrate. H103 serves as the catalytic Proton donor. Residues 104–105 and R114 each bind substrate; that span reads LS.

Belongs to the type-II 3-dehydroquinase family. As to quaternary structure, homododecamer.

It catalyses the reaction 3-dehydroquinate = 3-dehydroshikimate + H2O. The protein operates within metabolic intermediate biosynthesis; chorismate biosynthesis; chorismate from D-erythrose 4-phosphate and phosphoenolpyruvate: step 3/7. Catalyzes a trans-dehydration via an enolate intermediate. This is 3-dehydroquinate dehydratase from Tolumonas auensis (strain DSM 9187 / NBRC 110442 / TA 4).